Consider the following 356-residue polypeptide: Neutral protease 2 homolog UREG_03761 (356 aa).

An N-terminal signal peptide occupies residues 1–19 (MRFSSSFLSVLALASQALA). The propeptide occupies 20–181 (FPLNDLPTTD…ALPEATLDKR (162 aa)). Cystine bridges form between C189–C259 and C266–C284. H308 serves as a coordination point for Zn(2+). E309 is a catalytic residue. Zn(2+)-binding residues include H312 and D323.

The protein belongs to the peptidase M35 family. It depends on Zn(2+) as a cofactor.

The protein localises to the secreted. The catalysed reaction is Preferential cleavage of bonds with hydrophobic residues in P1'. Also 3-Asn-|-Gln-4 and 8-Gly-|-Ser-9 bonds in insulin B chain.. Its function is as follows. Secreted metalloproteinase that allows assimilation of proteinaceous substrates. Shows high activities on basic nuclear substrates such as histone and protamine. This chain is Neutral protease 2 homolog UREG_03761, found in Uncinocarpus reesii (strain UAMH 1704).